We begin with the raw amino-acid sequence, 763 residues long: Protein CHROMATIN REMODELING 19 (763 aa).

Disordered regions lie at residues 1–43 (MKRD…TPSI) and 114–149 (EDEE…RGED). A compositionally biased stretch (basic residues) spans 23–34 (VLKRPRTPKKTR). Acidic residues predominate over residues 114-135 (EDEEASDDDDDEAESSASEDEF). The Helicase ATP-binding domain maps to 226–404 (LLYKKGIEGA…WSLLEFMLPD (179 aa)). Position 239–246 (239–246 (DEMGLGKT)) interacts with ATP. The short motif at 353–356 (DEAH) is the DEAH box element. Residues 462 to 482 (RKQEDAYKEAIEEYRAASQAR) are a coiled coil. The short motif at 520–527 (IRRIYSDE) is the Nuclear localization signal element. A Helicase C-terminal domain is found at 592 to 742 (TLAELLPSMK…AAVLESGVHV (151 aa)).

This sequence belongs to the SNF2/RAD54 helicase family. As to quaternary structure, interacts with SUVR2 and itself.

It is found in the nucleus. DNA helicase that possesses intrinsic ATP-dependent nucleosome-remodeling activity and is both required for DNA repair and heterochromatin organization. Promotes DNA end resection of double-strand breaks (DSBs) following DNA damage: probably acts by weakening histone DNA interactions in nucleosomes flanking DSBs. Probable chromatin remodeling factor. Probable helicase-like transcription factor involved in transcriptional gene silencing. Associates with SUVR2 and contributes to transcriptional gene silencing at RNA-directed DNA methylation (RdDM) target loci but also at RdDM-independent target loci. May be involved in nucleosome positioning to form ordered nucleosome arrays on chromatin. This Arabidopsis thaliana (Mouse-ear cress) protein is Protein CHROMATIN REMODELING 19.